The following is a 616-amino-acid chain: Chaperone protein HscA (616 aa).

The protein belongs to the heat shock protein 70 family.

Chaperone involved in the maturation of iron-sulfur cluster-containing proteins. Has a low intrinsic ATPase activity which is markedly stimulated by HscB. Involved in the maturation of IscU. This chain is Chaperone protein HscA, found in Salmonella heidelberg (strain SL476).